The primary structure comprises 193 residues: dTTP/UTP pyrophosphatase (193 aa).

The active-site Proton acceptor is Asp-71.

The protein belongs to the Maf family. YhdE subfamily. It depends on a divalent metal cation as a cofactor.

It localises to the cytoplasm. The catalysed reaction is dTTP + H2O = dTMP + diphosphate + H(+). It catalyses the reaction UTP + H2O = UMP + diphosphate + H(+). In terms of biological role, nucleoside triphosphate pyrophosphatase that hydrolyzes dTTP and UTP. May have a dual role in cell division arrest and in preventing the incorporation of modified nucleotides into cellular nucleic acids. The protein is dTTP/UTP pyrophosphatase of Geobacter sp. (strain M21).